A 146-amino-acid chain; its full sequence is Large ribosomal subunit protein uL15 (146 aa).

Positions Met-1–Arg-13 are enriched in basic and acidic residues. Residues Met-1–Leu-57 are disordered. Residues Thr-23–Gln-35 show a composition bias toward gly residues.

The protein belongs to the universal ribosomal protein uL15 family. As to quaternary structure, part of the 50S ribosomal subunit.

Binds to the 23S rRNA. The chain is Large ribosomal subunit protein uL15 from Streptococcus thermophilus (strain CNRZ 1066).